Here is a 345-residue protein sequence, read N- to C-terminus: Protein-arginine kinase (345 aa).

The Phosphagen kinase C-terminal domain maps to 15 to 245 (LVISSRIRLA…LQIINQEIIS (231 aa)). Residues 18-22 (SSRIR), histidine 82, arginine 116, 167-171 (RASVM), and 198-203 (RGLYGE) contribute to the ATP site. The short motif at 328-333 (RDFNRA) is the RDXXRA motif of the pArg binding pocket involved in allosteric regulation element.

Belongs to the ATP:guanido phosphotransferase family.

It catalyses the reaction L-arginyl-[protein] + ATP = N(omega)-phospho-L-arginyl-[protein] + ADP + H(+). Its activity is regulated as follows. Appears to be allosterically activated by the binding of pArg-containing polypeptides to the pArg-binding pocket localized in the C-terminal domain of McsB. Catalyzes the specific phosphorylation of arginine residues in proteins. This chain is Protein-arginine kinase, found in Clostridium kluyveri (strain NBRC 12016).